Here is a 1958-residue protein sequence, read N- to C-terminus: Echinoderm microtubule-associated protein-like 6 (1958 aa).

WD repeat units lie at residues 59 to 100 (GHND…TVSL), 104 to 145 (VHTH…LLAS), 148 to 187 (GHSD…LTAK), 195 to 233 (GDLQ…RTIQ), 235 to 273 (AHSA…TKID), 280 to 321 (GYKG…LILQ), 323 to 362 (HCEG…LIAR), 364 to 403 (NMEE…EVVH), 406 to 445 (DRKE…KKIG), and 561 to 601 (GHSA…VSNG). The segment at 603-626 (LETAPQEGGADSYSEESDSDLSDV) is disordered. Over residues 615-626 (YSEESDSDLSDV) the composition is skewed to acidic residues. WD repeat units follow at residues 725–766 (GHDD…CLSL), 770–811 (QHQR…KIAT), 814–853 (GHKD…FTSK), 861–900 (GKLE…KTVK), 901–940 (AHDG…KTYA), 996–1035 (HMEG…RMLA), 1038–1077 (KLKK…DMVS), 1080–1120 (HRKE…RVGI), 1191–1230 (SDIT…QHAR), and 1236–1276 (GHSA…TQES). Over residues 1322–1337 (KPHQQLKEVSVEERPP) the composition is skewed to basic and acidic residues. The interval 1322-1353 (KPHQQLKEVSVEERPPVSRAAPQPEKLQKNNI) is disordered. 10 WD repeats span residues 1412 to 1456 (EHTD…TLSM), 1460 to 1501 (FHSK…KVAS), 1504 to 1543 (GHLE…LLYK), 1553 to 1591 (AKMQ…RLVA), 1593 to 1638 (AHTG…CRAF), 1685 to 1724 (HMEG…LLNK), 1726 to 1767 (SLGH…GKKR), 1768 to 1807 (DRKS…NLNR), 1880 to 1919 (ADKA…KFAK), and 1925 to 1958 (GHSA…WRCL).

The protein belongs to the WD repeat EMAP family.

Its subcellular location is the cytoplasm. It is found in the cytoskeleton. Functionally, may modify the assembly dynamics of microtubules, such that microtubules are slightly longer, but more dynamic. This is Echinoderm microtubule-associated protein-like 6 (EML6) from Homo sapiens (Human).